The chain runs to 171 residues: Co-chaperone protein HscB homolog (171 aa).

Residues 2–74 (NHFELFGLPL…ISRAEYLLVQ (73 aa)) enclose the J domain.

Belongs to the HscB family. As to quaternary structure, interacts with HscA and stimulates its ATPase activity.

In terms of biological role, co-chaperone involved in the maturation of iron-sulfur cluster-containing proteins. Seems to help targeting proteins to be folded toward HscA. This Vibrio atlanticus (strain LGP32) (Vibrio splendidus (strain Mel32)) protein is Co-chaperone protein HscB homolog.